A 644-amino-acid chain; its full sequence is DNA gyrase subunit B (644 aa).

Residues Cys-429–Pro-543 form the Toprim domain. Glu-435, Asp-508, and Asp-510 together coordinate Mg(2+).

It belongs to the type II topoisomerase GyrB family. As to quaternary structure, heterotetramer, composed of two GyrA and two GyrB chains. In the heterotetramer, GyrA contains the active site tyrosine that forms a transient covalent intermediate with DNA, while GyrB binds cofactors and catalyzes ATP hydrolysis. The cofactor is Mg(2+). Requires Mn(2+) as cofactor. Ca(2+) is required as a cofactor.

The protein localises to the cytoplasm. It carries out the reaction ATP-dependent breakage, passage and rejoining of double-stranded DNA.. Its function is as follows. A type II topoisomerase that negatively supercoils closed circular double-stranded (ds) DNA in an ATP-dependent manner to modulate DNA topology and maintain chromosomes in an underwound state. Negative supercoiling favors strand separation, and DNA replication, transcription, recombination and repair, all of which involve strand separation. Also able to catalyze the interconversion of other topological isomers of dsDNA rings, including catenanes and knotted rings. Type II topoisomerases break and join 2 DNA strands simultaneously in an ATP-dependent manner. In Staphylococcus aureus (strain COL), this protein is DNA gyrase subunit B.